We begin with the raw amino-acid sequence, 864 residues long: Protein translocase subunit SecA (864 aa).

Residues Q85, 103 to 107 (GEGKT), and D542 each bind ATP.

It belongs to the SecA family. As to quaternary structure, monomer and homodimer. Part of the essential Sec protein translocation apparatus which comprises SecA, SecYEG and auxiliary proteins SecDF. Other proteins may also be involved.

It localises to the cell inner membrane. The protein localises to the cytoplasm. It carries out the reaction ATP + H2O + cellular proteinSide 1 = ADP + phosphate + cellular proteinSide 2.. Its function is as follows. Part of the Sec protein translocase complex. Interacts with the SecYEG preprotein conducting channel. Has a central role in coupling the hydrolysis of ATP to the transfer of proteins into and across the cell membrane, serving as an ATP-driven molecular motor driving the stepwise translocation of polypeptide chains across the membrane. The polypeptide is Protein translocase subunit SecA (Fervidobacterium nodosum (strain ATCC 35602 / DSM 5306 / Rt17-B1)).